The chain runs to 611 residues: MCGIVGAIAERNITPILIEGLKRLEYRGYDSAGVAVFDNEGRLQRCRRVGKVASLEEGLAGTPLLGRLGIAHTRWATHGAPTEGNAHPHFSSDEVAVVHNGIIENHEPLRERLKGLGYVFTSQTDTEVIVHLLHHKLQSIGDLTLALKDAVKELHGAYGLAVISAAQPDRIVAARSGSPLVIGLGLGENFLASDQLALRQVTDRFIYLEEGDIAEIRRDSVRLWDVQGNDVQRETVQYHEGAEAADKGEYRHFMLKEIHEQPSVVQRTLEGRLGQNQVLVESFGPQAAELFAKVRNVQIVACGTSYHAGMVARYWLESLTGIPCQVEVASEFRYRKVAVQPDCLFVTISQSGETADTLAALRNAKELGFLSSVAICNVATSSLVRESDLTLLTQAGPEIGVASTKAFTTQLVALLLLTLGIGQVQKRLADGVEAELVDELRRLPTRLGEALAMNRTVEKVSELFAEKHHTLFLGRGAQFPVALEGALKLKEISYIHAEAYPAGELKHGPLALVDSDMPVVTVAPNNELVEKLKSNLQEVRARGGELVVFADEGAGIEAGEGTHVVGMPHIGDVLSPILYTIPLQLLSYHVAVLKGTDVDQPRNLAKSVTVE.

Cys-2 serves as the catalytic Nucleophile; for GATase activity. In terms of domain architecture, Glutamine amidotransferase type-2 spans 2–219 (CGIVGAIAER…EGDIAEIRRD (218 aa)). SIS domains follow at residues 287-427 (AAEL…VQKR) and 460-601 (VSEL…VDQP). Lys-606 (for Fru-6P isomerization activity) is an active-site residue.

As to quaternary structure, homodimer.

It localises to the cytoplasm. It carries out the reaction D-fructose 6-phosphate + L-glutamine = D-glucosamine 6-phosphate + L-glutamate. In terms of biological role, catalyzes the first step in hexosamine metabolism, converting fructose-6P into glucosamine-6P using glutamine as a nitrogen source. This is Glutamine--fructose-6-phosphate aminotransferase [isomerizing] from Pseudomonas aeruginosa (strain ATCC 15692 / DSM 22644 / CIP 104116 / JCM 14847 / LMG 12228 / 1C / PRS 101 / PAO1).